Consider the following 208-residue polypeptide: Small ribosomal subunit protein uS4 (208 aa).

One can recognise an S4 RNA-binding domain in the interval 98–158 (SRLDNAVYRL…EKSRNMQVID (61 aa)).

This sequence belongs to the universal ribosomal protein uS4 family. Part of the 30S ribosomal subunit. Contacts protein S5. The interaction surface between S4 and S5 is involved in control of translational fidelity.

Functionally, one of the primary rRNA binding proteins, it binds directly to 16S rRNA where it nucleates assembly of the body of the 30S subunit. Its function is as follows. With S5 and S12 plays an important role in translational accuracy. The sequence is that of Small ribosomal subunit protein uS4 from Desulfosudis oleivorans (strain DSM 6200 / JCM 39069 / Hxd3) (Desulfococcus oleovorans).